The primary structure comprises 226 residues: ATP synthase F(0) complex subunit a (226 aa).

The next 5 membrane-spanning stretches (helical) occupy residues 5–25 (LFAP…LIII), 68–88 (WSLM…LGML), 97–117 (QLSM…TTGF), 136–156 (FLIP…PVAW), and 189–209 (AFIT…VALI).

Belongs to the ATPase A chain family. Component of the ATP synthase complex composed at least of ATP5F1A/subunit alpha, ATP5F1B/subunit beta, ATP5MC1/subunit c (homooctomer), MT-ATP6/subunit a, MT-ATP8/subunit 8, ATP5ME/subunit e, ATP5MF/subunit f, ATP5MG/subunit g, ATP5MK/subunit k, ATP5MJ/subunit j, ATP5F1C/subunit gamma, ATP5F1D/subunit delta, ATP5F1E/subunit epsilon, ATP5PF/subunit F6, ATP5PB/subunit b, ATP5PD/subunit d, ATP5PO/subunit OSCP. ATP synthase complex consists of a soluble F(1) head domain (subunits alpha(3) and beta(3)) - the catalytic core - and a membrane F(0) domain - the membrane proton channel (subunits c, a, 8, e, f, g, k and j). These two domains are linked by a central stalk (subunits gamma, delta, and epsilon) rotating inside the F1 region and a stationary peripheral stalk (subunits F6, b, d, and OSCP). Interacts with DNAJC30; interaction is direct.

It is found in the mitochondrion inner membrane. The enzyme catalyses H(+)(in) = H(+)(out). Functionally, subunit a, of the mitochondrial membrane ATP synthase complex (F(1)F(0) ATP synthase or Complex V) that produces ATP from ADP in the presence of a proton gradient across the membrane which is generated by electron transport complexes of the respiratory chain. ATP synthase complex consist of a soluble F(1) head domain - the catalytic core - and a membrane F(1) domain - the membrane proton channel. These two domains are linked by a central stalk rotating inside the F(1) region and a stationary peripheral stalk. During catalysis, ATP synthesis in the catalytic domain of F(1) is coupled via a rotary mechanism of the central stalk subunits to proton translocation. With the subunit c (ATP5MC1), forms the proton-conducting channel in the F(0) domain, that contains two crucial half-channels (inlet and outlet) that facilitate proton movement from the mitochondrial intermembrane space (IMS) into the matrix. Protons are taken up via the inlet half-channel and released through the outlet half-channel, following a Grotthuss mechanism. This chain is ATP synthase F(0) complex subunit a, found in Balaenoptera physalus (Fin whale).